The chain runs to 337 residues: Glyceraldehyde-3-phosphate dehydrogenase 2 (337 aa).

NADP(+)-binding positions include 11–12, Asp35, Arg80, and Thr122; that span reads RI. D-glyceraldehyde 3-phosphate is bound by residues 153 to 155, Thr184, Arg199, 212 to 213, and Arg235; these read SCT and TG. Residue Cys154 is the Nucleophile of the active site. Asn317 serves as a coordination point for NADP(+).

Homotetramer.

Its subcellular location is the cytoplasm. The enzyme catalyses D-glyceraldehyde 3-phosphate + phosphate + NADP(+) = (2R)-3-phospho-glyceroyl phosphate + NADPH + H(+). It catalyses the reaction D-glyceraldehyde 3-phosphate + phosphate + NAD(+) = (2R)-3-phospho-glyceroyl phosphate + NADH + H(+). Its pathway is carbohydrate biosynthesis; Calvin cycle. Gap2 has a major role in carbon fixation as a component of the Calvin cycle. Catalyzes the oxidative phosphorylation of glyceraldehyde 3-phosphate (G3P) to 1,3-bisphosphoglycerate (BPG) using the cofactor NADP. The first reaction step involves the formation of a hemiacetal intermediate between G3P and a cysteine residue, and this hemiacetal intermediate is then oxidized to a thioester, with concomitant reduction of NADP to NADPH. The reduced NADPH is then exchanged with the second NAD, and the thioester is attacked by a nucleophilic inorganic phosphate to produce BPG. The chain is Glyceraldehyde-3-phosphate dehydrogenase 2 (gap2) from Nostoc sp. (strain PCC 7120 / SAG 25.82 / UTEX 2576).